The following is a 461-amino-acid chain: Cysteine--tRNA ligase (461 aa).

Position 29 (cysteine 29) interacts with Zn(2+). Positions 31 to 41 (MTVYDFCHIGH) match the 'HIGH' region motif. Zn(2+) contacts are provided by cysteine 210, histidine 235, and glutamate 239. Positions 267 to 271 (KMSKS) match the 'KMSKS' region motif. Residue lysine 270 coordinates ATP.

This sequence belongs to the class-I aminoacyl-tRNA synthetase family. In terms of assembly, monomer. It depends on Zn(2+) as a cofactor.

It localises to the cytoplasm. The enzyme catalyses tRNA(Cys) + L-cysteine + ATP = L-cysteinyl-tRNA(Cys) + AMP + diphosphate. This chain is Cysteine--tRNA ligase, found in Stutzerimonas stutzeri (strain A1501) (Pseudomonas stutzeri).